Reading from the N-terminus, the 343-residue chain is Fructose-1,6-bisphosphatase, cytosolic (343 aa).

Residues E71, E100, D121, L123, and D124 each coordinate Mg(2+). Substrate-binding positions include 124 to 127, N215, Y247, Y267, and K277; that span reads DGSS. E283 is a binding site for Mg(2+).

It belongs to the FBPase class 1 family. Mg(2+) is required as a cofactor.

The protein resides in the cytoplasm. It carries out the reaction beta-D-fructose 1,6-bisphosphate + H2O = beta-D-fructose 6-phosphate + phosphate. The sequence is that of Fructose-1,6-bisphosphatase, cytosolic (CFBP) from Saccharum hybrid (Sugarcane).